Here is a 365-residue protein sequence, read N- to C-terminus: Zinc finger TRAF-type-containing protein 1-A (365 aa).

Residues 1–56 (MSEEREAPGPLASSSAGLGAEVGQEEVPGGAGPARLLLLPSDSDGPPKKRLRSEAE) form a disordered region. Residues 72 to 117 (CTVCLDLPKASVYQCTNGHLMCAGCFIHLLADSRLKEEQATCPNCR) form an RING-type; degenerate zinc finger. The TRAF-type zinc-finger motif lies at 113 to 186 (CPNCRCEISK…PWEGPYHELT (74 aa)).

Belongs to the ZFTRAF1 family.

It localises to the cytoplasm. The chain is Zinc finger TRAF-type-containing protein 1-A from Xenopus laevis (African clawed frog).